A 59-amino-acid polypeptide reads, in one-letter code: Putative potassium channel toxin Ts23 (59 aa).

Residues 1 to 22 (MKAFYGILIIFILISMLDLSQQ) form the signal peptide. 3 disulfides stabilise this stretch: Cys-29-Cys-50, Cys-35-Cys-55, and Cys-39-Cys-57.

The protein belongs to the short scorpion toxin superfamily. Potassium channel inhibitor family. Alpha-KTx 04 subfamily. As to expression, expressed by the venom gland.

It is found in the secreted. Its function is as follows. Potently blocks Kv1.1/KCNA1 (85%), Kv1.2/KCNA2 (91%), Kv1.3/KCNA3 (89%), Kv1.6/KCNA6 (94%), and Shaker (97%). The chain is Putative potassium channel toxin Ts23 from Tityus serrulatus (Brazilian scorpion).